The chain runs to 876 residues: Eukaryotic translation initiation factor 3 subunit C (876 aa).

Disordered stretches follow at residues 1–25 (MSRFFATGTDSESESSSEDEPVVRA) and 154–233 (SXFR…IREQ). Residues 11–20 (SESESSSEDE) are compositionally biased toward acidic residues. Composition is skewed to basic and acidic residues over residues 154 to 172 (SXFREDPDLPDDNERKDSS) and 182 to 192 (KPIKEKPKPEP). Residues 206–219 (SMDWASSSSDSSFS) are compositionally biased toward low complexity. Positions 632–808 (FHMHINLELL…ECAILHRSEP (177 aa)) constitute a PCI domain. The interval 839–876 (FFQRGGAQRGEGRQRERPREGWNRRTRNRRRDDERADD) is disordered. A compositionally biased stretch (basic and acidic residues) spans 848–861 (GEGRQRERPREGWN).

This sequence belongs to the eIF-3 subunit C family. In terms of assembly, component of the eukaryotic translation initiation factor 3 (eIF-3) complex.

It is found in the cytoplasm. In terms of biological role, component of the eukaryotic translation initiation factor 3 (eIF-3) complex, which is involved in protein synthesis of a specialized repertoire of mRNAs and, together with other initiation factors, stimulates binding of mRNA and methionyl-tRNAi to the 40S ribosome. The eIF-3 complex specifically targets and initiates translation of a subset of mRNAs involved in cell proliferation. The polypeptide is Eukaryotic translation initiation factor 3 subunit C (Bombyx mori (Silk moth)).